The following is a 484-amino-acid chain: MSAEHSSRRVAMVTLGCARNEVDSEELAGNLHQRGWDLIDDESSADVVVVNTCGFVESAKKDSVDTLLAASDTGAKVVAVGCMAERYGAELAEHLPEADAVLGFDHYGNLAERLDDVLAGRAIQPHQPQDRRKMLPITPVARPAAAAASEVAVPGHGWVPSTRGIARRRLDDSPLAALKLASGCDRRCSFCAIPSFRGSFLSRQPEEVLGEAAWLAEQGAKELFLVSENSTSYGKDLSDPRALETLLPRLAGIDGVDRVRVSYLQPAETRPGLVRAIATTPGVAPYFDLSFQHSSEKVLRRMRRFGSTESFLALIEQIRELAPEAGIRSNVIVGFPGETEEDFEELQDFLTRARLDAVGVFGYSDEDGTEAAGFDGKLDADVVAARVEQVSALADELVAQRAEDRVGTEVRVLVERDEDGEVTGRAEHQGPEVDGECVVVDAGGAGVGEVVHCRVIASEGVDLVVRPVGAAQDSSQLRGAGEGS.

An MTTase N-terminal domain is found at 8 to 119 (RRVAMVTLGC…LAERLDDVLA (112 aa)). The [4Fe-4S] cluster site is built by C17, C53, C82, C184, C188, and C191. Residues 170 to 401 (LDDSPLAALK…ALADELVAQR (232 aa)) enclose the Radical SAM core domain. The TRAM domain occupies 403–469 (EDRVGTEVRV…GVDLVVRPVG (67 aa)).

This sequence belongs to the methylthiotransferase family. RimO subfamily. It depends on [4Fe-4S] cluster as a cofactor.

The protein localises to the cytoplasm. The enzyme catalyses L-aspartate(89)-[ribosomal protein uS12]-hydrogen + (sulfur carrier)-SH + AH2 + 2 S-adenosyl-L-methionine = 3-methylsulfanyl-L-aspartate(89)-[ribosomal protein uS12]-hydrogen + (sulfur carrier)-H + 5'-deoxyadenosine + L-methionine + A + S-adenosyl-L-homocysteine + 2 H(+). Its function is as follows. Catalyzes the methylthiolation of an aspartic acid residue of ribosomal protein uS12. In Saccharopolyspora erythraea (strain ATCC 11635 / DSM 40517 / JCM 4748 / NBRC 13426 / NCIMB 8594 / NRRL 2338), this protein is Ribosomal protein uS12 methylthiotransferase RimO.